A 578-amino-acid polypeptide reads, in one-letter code: Raftlin (578 aa).

Gly2 carries the N-myristoyl glycine lipid modification. A lipid anchor (S-palmitoyl cysteine) is attached at Cys3. The segment covering 169–184 (VNSAGSSAPVSTANST) has biased composition (polar residues). Disordered stretches follow at residues 169–271 (VNSA…VHEE), 449–525 (FSRE…PGGL), and 551–578 (CTGH…VEEN). A phosphoserine mark is found at Ser183, Ser199, and Ser220. Basic and acidic residues predominate over residues 185–206 (EDARDAKNARGDHASLENEKPG). The span at 457–466 (RQMRKSKGKL) shows a compositional bias: basic residues. Positions 467–485 (SARDKQQAEENEKNLEDQS) are enriched in basic and acidic residues. The residue at position 505 (Ser505) is a Phosphoserine. Basic and acidic residues-rich tracts occupy residues 506 to 518 (EEMK…DKGE) and 557 to 578 (PGED…VEEN).

This sequence belongs to the raftlin family. In terms of assembly, interacts with TLR4; the interaction occurs in response to lipopolysaccharide stimulation. Interacts with CLTC; the interaction occurs in response to pathogens. Interacts with AP2A1 and AP2B1. Expressed in B-cells (at protein level). Expressed in dendritic cells and macrophages.

The protein resides in the cell membrane. Its subcellular location is the cytoplasm. It is found in the membrane raft. It localises to the endosome. The protein localises to the early endosome. Its function is as follows. Involved in protein trafficking via association with clathrin and AP2 complex. Upon bacterial lipopolysaccharide stimulation, mediates internalization of TLR4 to endosomes in dendritic cells and macrophages; and internalization of poly(I:C) to TLR3-positive endosomes in myeloid dendritic cells and epithelial cells; resulting in activation of TICAM1-mediated signaling and subsequent IFNB1 production. Involved in T-cell antigen receptor-mediated signaling by regulating tyrosine kinase LCK localization, T-cell dependent antibody production and cytokine secretion. May regulate B-cell antigen receptor-mediated signaling. May play a pivotal role in the formation and/or maintenance of lipid rafts. The protein is Raftlin (RFTN1) of Homo sapiens (Human).